A 181-amino-acid polypeptide reads, in one-letter code: Mitochondrial inner membrane protein Mpv17 (181 aa).

The next 4 membrane-spanning stretches (helical) occupy residues Met-20 to Leu-37, Phe-51 to Phe-67, Leu-86 to Phe-103, and Val-152 to Ile-169.

Belongs to the peroxisomal membrane protein PXMP2/4 family.

It localises to the mitochondrion inner membrane. Involved in mitochondria homeostasis. The protein is Mitochondrial inner membrane protein Mpv17 of Caenorhabditis elegans.